The following is a 488-amino-acid chain: Probable glycine dehydrogenase (decarboxylating) subunit 2 (488 aa).

Lys-274 bears the N6-(pyridoxal phosphate)lysine mark.

The protein belongs to the GcvP family. C-terminal subunit subfamily. The glycine cleavage system is composed of four proteins: P, T, L and H. In this organism, the P 'protein' is a heterodimer of two subunits. The cofactor is pyridoxal 5'-phosphate.

The catalysed reaction is N(6)-[(R)-lipoyl]-L-lysyl-[glycine-cleavage complex H protein] + glycine + H(+) = N(6)-[(R)-S(8)-aminomethyldihydrolipoyl]-L-lysyl-[glycine-cleavage complex H protein] + CO2. Functionally, the glycine cleavage system catalyzes the degradation of glycine. The P protein binds the alpha-amino group of glycine through its pyridoxal phosphate cofactor; CO(2) is released and the remaining methylamine moiety is then transferred to the lipoamide cofactor of the H protein. The sequence is that of Probable glycine dehydrogenase (decarboxylating) subunit 2 from Listeria monocytogenes serotype 4a (strain HCC23).